A 210-amino-acid chain; its full sequence is Histidine biosynthesis bifunctional protein HisIE (210 aa).

The tract at residues 1-106 (MTNYKIDFSK…SCFNTEVPFS (106 aa)) is phosphoribosyl-AMP cyclohydrolase. The interval 107–210 (VQTLAQTVQD…KGERQNIEQW (104 aa)) is phosphoribosyl-ATP pyrophosphohydrolase.

This sequence in the N-terminal section; belongs to the PRA-CH family. It in the C-terminal section; belongs to the PRA-PH family.

The protein localises to the cytoplasm. The enzyme catalyses 1-(5-phospho-beta-D-ribosyl)-ATP + H2O = 1-(5-phospho-beta-D-ribosyl)-5'-AMP + diphosphate + H(+). It carries out the reaction 1-(5-phospho-beta-D-ribosyl)-5'-AMP + H2O = 1-(5-phospho-beta-D-ribosyl)-5-[(5-phospho-beta-D-ribosylamino)methylideneamino]imidazole-4-carboxamide. It functions in the pathway amino-acid biosynthesis; L-histidine biosynthesis; L-histidine from 5-phospho-alpha-D-ribose 1-diphosphate: step 2/9. The protein operates within amino-acid biosynthesis; L-histidine biosynthesis; L-histidine from 5-phospho-alpha-D-ribose 1-diphosphate: step 3/9. In Staphylococcus aureus (strain COL), this protein is Histidine biosynthesis bifunctional protein HisIE (hisI).